A 256-amino-acid polypeptide reads, in one-letter code: Putative bidirectional sugar transporter SWEET7e (256 aa).

At 1-9 (MVSPDLIRN) the chain is on the extracellular side. A helical transmembrane segment spans residues 10–30 (VVGIVGNAISFGLFLSPVLTF). Residues 10–97 (VVGIVGNAIS…TIFFLFSNKK (88 aa)) form the MtN3/slv 1 domain. The Cytoplasmic portion of the chain corresponds to 31-45 (WRIIKEKDMKYFKAD). The helical transmembrane segment at 46–66 (PYLATLLNCMLWVFYGLPIVH) threads the bilayer. Over 67–69 (PNS) the chain is Extracellular. The chain crosses the membrane as a helical span at residues 70 to 90 (ILVVTINGIGLVIEAVYLTIF). Residues 91–100 (FLFSNKKNKK) lie on the Cytoplasmic side of the membrane. Residues 101-121 (MGVVLATEALFMAAVALGVLL) traverse the membrane as a helical segment. Over 122-130 (GAHTHQRRS) the chain is Extracellular. A helical transmembrane segment spans residues 131 to 151 (LIVGILCVIFGTIMYSSPLTI). In terms of domain architecture, MtN3/slv 2 spans 133-212 (VGILCVIFGT…LMQLILDKNQ (80 aa)). At 152–164 (MSQVVKTKSVEYM) the chain is on the cytoplasmic side. Residues 165–185 (PLLLSVVSFLNGLCWTSYALI) form a helical membrane-spanning segment. Position 186 (Arg186) is a topological domain, extracellular. The chain crosses the membrane as a helical span at residues 187–207 (FDIFITIPNGLGVLFTLMQLI). Residues 208–256 (LDKNQDKNLELPTVAPVAKETSIVTPVSKDDDINGSTASHVIINITKEP) are Cytoplasmic-facing.

Belongs to the SWEET sugar transporter family. Forms homooligomers and/or heterooligomers.

It localises to the cell membrane. Functionally, mediates both low-affinity uptake and efflux of sugar across the plasma membrane. The protein is Putative bidirectional sugar transporter SWEET7e (SWEET7E) of Oryza sativa subsp. japonica (Rice).